The following is a 429-amino-acid chain: uncharacterized protein (429 aa).

11 helical membrane-spanning segments follow: residues 27–47 (PFFF…QSIG), 48–68 (GIMT…VSIL), 78–98 (ILLC…YWVF), 106–126 (IFIL…FLAL), 142–162 (ALII…PAII), 198–218 (LLLA…TIVI), 219–239 (AILT…CFYF), 249–269 (VLLS…YFLD), 288–308 (FIVG…FGYL), 351–371 (LILD…IYFI), and 399–419 (FFIS…LIIL).

The protein resides in the cell membrane. May function as a transporter. This is an uncharacterized protein from Klebsiella pneumoniae.